A 501-amino-acid polypeptide reads, in one-letter code: Tegument protein US24 (501 aa).

Belongs to the herpesviridae US22 family.

The protein resides in the virion tegument. The protein is Tegument protein US24 (US24) of Human cytomegalovirus (strain Merlin) (HHV-5).